The chain runs to 225 residues: Transcription factor HES-7 (225 aa).

Residues 12–69 (GPKMLKPLVEKRRRDRINRSLEELRLLLLERTRDQNLRNPKLEKAEILEFAVGYLRER) form the bHLH domain. Residues 92–122 (YLSGFRECLLRLAAFAHDASPAARSQLFSAL) form the Orange domain. Residues 124–225 (GYRRPKPPRP…PPPAFWRPWP (102 aa)) are disordered. Pro residues-rich tracts occupy residues 140–149 (LPAPRPPLDP) and 213–225 (PSLP…RPWP). Residues 221 to 224 (WRPW) carry the WRPW motif motif.

In terms of assembly, transcription repression requires formation of a complex with a corepressor protein of the Groucho/TLE family.

The protein localises to the nucleus. Functionally, transcriptional repressor. Represses transcription from both N box- and E box-containing promoters. May with HES1, cooperatively regulate somite formation in the presomitic mesoderm (PSM). May function as a segmentation clock, which is essential for coordinated somite segmentation. The polypeptide is Transcription factor HES-7 (Hes7) (Mus musculus (Mouse)).